The primary structure comprises 510 residues: NAD(P)H-quinone oxidoreductase subunit 2, chloroplastic (510 aa).

The next 12 membrane-spanning stretches (helical) occupy residues 24–44, 59–79, 99–119, 124–144, 149–169, 184–204, 229–249, 295–315, 323–343, 347–367, 395–415, and 418–438; these read LLLFHGSFIFPECILIFGLIL, WFYFISSTSLVMSITALLFRW, IFQFLILLCSTLCIPLSVEYI, MAITEFLLFVLTATLGGMFLC, LITIFVAPECFSLCSYLLSGY, LLMGGASSSILVHGFSWLYGL, ISIALISITVGIGFKLSPAPF, WHLLLEILAILSMILGNLIAI, MLAYSSIGQIGYVIIGIIVGD, GYASMITYMLFYISMNLGTFA, ALSLALCLLSLGGLPPLAGFF, and LHLFWCGWQAGLYFLVSIGLL.

Belongs to the complex I subunit 2 family. NDH is composed of at least 16 different subunits, 5 of which are encoded in the nucleus.

It is found in the plastid. The protein resides in the chloroplast thylakoid membrane. It catalyses the reaction a plastoquinone + NADH + (n+1) H(+)(in) = a plastoquinol + NAD(+) + n H(+)(out). The catalysed reaction is a plastoquinone + NADPH + (n+1) H(+)(in) = a plastoquinol + NADP(+) + n H(+)(out). Functionally, NDH shuttles electrons from NAD(P)H:plastoquinone, via FMN and iron-sulfur (Fe-S) centers, to quinones in the photosynthetic chain and possibly in a chloroplast respiratory chain. The immediate electron acceptor for the enzyme in this species is believed to be plastoquinone. Couples the redox reaction to proton translocation, and thus conserves the redox energy in a proton gradient. The protein is NAD(P)H-quinone oxidoreductase subunit 2, chloroplastic of Muilla maritima (Sea muilla).